A 371-amino-acid polypeptide reads, in one-letter code: Neuropeptide Y receptor type 6 (371 aa).

Over 1-31 (MEVLTNQPTPNKTSGKSNNSAFFYFESCQPP) the chain is Extracellular. N-linked (GlcNAc...) asparagine glycosylation is found at Asn11 and Asn18. A helical membrane pass occupies residues 32–52 (FLAILLLLIAYTVILIMGIFG). The Cytoplasmic segment spans residues 53 to 82 (NLSLIIIIFKKQREAQNVTNILIANLSLSD). A helical membrane pass occupies residues 83-103 (ILVCVMCIPFTVIYTLMDHWV). The Extracellular portion of the chain corresponds to 104–111 (FGNTMCKL). Cys109 and Cys196 are disulfide-bonded. Residues 112 to 132 (TSYVQSVSVSVSIFSLVLIAI) traverse the membrane as a helical segment. The Cytoplasmic segment spans residues 133-150 (ERYQLIVNPRGWKPRVAH). The helical transmembrane segment at 151–171 (AYWGIILIWLISLTLSIPLFL) threads the bilayer. Residues 172 to 206 (SYHLTNEPFHNLSLPTDIYTHQVACVEIWPSKLNQ) are Extracellular-facing. Asn182 carries an N-linked (GlcNAc...) asparagine glycan. The helical transmembrane segment at 207-227 (LLFSTSLFMLQYFVPLGFILI) threads the bilayer. The Cytoplasmic segment spans residues 228-263 (CYLKIVLCLRKRTRQVDRRKENKSRLNENKRVNVML). Residues 264–284 (ISIVVTFGACWLPLNIFNVIF) form a helical membrane-spanning segment. The Extracellular portion of the chain corresponds to 285-297 (DWYHEMLMSCHHD). Residues 298-318 (LVFVVCHLIAMVSTCINPLFY) traverse the membrane as a helical segment. Topologically, residues 319 to 371 (GFLNKNFQKDLMMLIHHCWCGEPQESYENIAMSTMHTDESKGSLKLAHIPTGI) are cytoplasmic. Cys336 carries S-palmitoyl cysteine lipidation.

It belongs to the G-protein coupled receptor 1 family. As to expression, kidney and discrete regions of the hypothalamus including the suprachiasmatic nucleus, anterior hypothalamus, bed nucleus stria terminalis, and the ventromedial nucleus.

It is found in the cell membrane. In terms of biological role, receptor for neuropeptide Y and peptide YY. The rank order of affinity of this receptor for pancreatic polypeptides is NPY = PYY &gt;= NPY (2-36) = [Leu-31, Pro-34] NPY &gt; NPY (13-36) &gt; PP. The activity of this receptor is mediated by G proteins that inhibits adenylate cyclase activity. This Mus musculus (Mouse) protein is Neuropeptide Y receptor type 6 (Npy6r).